A 252-amino-acid polypeptide reads, in one-letter code: Gamma carbonic anhydrase-like 1, mitochondrial (252 aa).

The N-terminal 29 residues, 1 to 29, are a transit peptide targeting the mitochondrion; the sequence is MATSIARLSRRGVTSNLIRRCFAAEAALA. Substrate-binding positions include 99–101 and 114–115; these read RGD and QE. Residue histidine 120 coordinates Zn(2+). Positions 148, 160, and 227 each coordinate substrate.

The protein belongs to the gamma-class carbonic anhydrase family. Component of the mitochondrial oxidoreductase respiratory chain complex I; element of the extra matrix-exposed domain, which is attached to the membrane arm of this complex. Interacts with GAMMACA2.

It is found in the mitochondrion membrane. Involved in complex I assembly in mitochondria and respiration. The polypeptide is Gamma carbonic anhydrase-like 1, mitochondrial (GAMMACAL1) (Arabidopsis thaliana (Mouse-ear cress)).